We begin with the raw amino-acid sequence, 57 residues long: Large ribosomal subunit protein bL32 (57 aa).

Belongs to the bacterial ribosomal protein bL32 family.

In Staphylococcus haemolyticus (strain JCSC1435), this protein is Large ribosomal subunit protein bL32.